Reading from the N-terminus, the 118-residue chain is Non-specific lipid-transfer protein 2 (118 aa).

An N-terminal signal peptide occupies residues 1–25 (MARGMKLACVVLVICMVVIAPMAEG). Disulfide bonds link C29/C76, C39/C53, C54/C99, and C74/C113.

Belongs to the plant LTP family.

Its function is as follows. Plant non-specific lipid-transfer proteins transfer phospholipids as well as galactolipids across membranes. May play a role in wax or cutin deposition in the cell walls of expanding epidermal cells and certain secretory tissues. Binds saturated fatty acids, jasmonic acid and, with highest efficiency, unsaturated fatty acids and lysolipids. This chain is Non-specific lipid-transfer protein 2, found in Lens culinaris (Lentil).